Reading from the N-terminus, the 500-residue chain is Chromosomal replication initiator protein DnaA (500 aa).

A domain I, interacts with DnaA modulators region spans residues M1–E81. The domain II stretch occupies residues E81–T155. A domain III, AAA+ region region spans residues H156–A377. G200, G202, K203, and T204 together coordinate ATP. The domain IV, binds dsDNA stretch occupies residues S378 to N500.

The protein belongs to the DnaA family. As to quaternary structure, oligomerizes as a right-handed, spiral filament on DNA at oriC.

The protein resides in the cytoplasm. In terms of biological role, plays an essential role in the initiation and regulation of chromosomal replication. ATP-DnaA binds to the origin of replication (oriC) to initiate formation of the DNA replication initiation complex once per cell cycle. Binds the DnaA box (a 9 base pair repeat at the origin) and separates the double-stranded (ds)DNA. Forms a right-handed helical filament on oriC DNA; dsDNA binds to the exterior of the filament while single-stranded (ss)DNA is stabiized in the filament's interior. The ATP-DnaA-oriC complex binds and stabilizes one strand of the AT-rich DNA unwinding element (DUE), permitting loading of DNA polymerase. After initiation quickly degrades to an ADP-DnaA complex that is not apt for DNA replication. Binds acidic phospholipids. This is Chromosomal replication initiator protein DnaA from Bifidobacterium longum subsp. infantis (strain ATCC 15697 / DSM 20088 / JCM 1222 / NCTC 11817 / S12).